Here is a 447-residue protein sequence, read N- to C-terminus: Argininosuccinate synthase (447 aa).

Residues Ala17–Ser25 and Ala43 contribute to the ATP site. Tyr99 provides a ligand contact to L-citrulline. The ATP site is built by Gly129 and Thr131. Thr131, Asn135, and Asp136 together coordinate L-aspartate. Asn135 provides a ligand contact to L-citrulline. Asp136 serves as a coordination point for ATP. L-citrulline contacts are provided by Arg139 and Ser192. Asp194 is a binding site for ATP. Residues Thr201, Glu203, and Glu280 each coordinate L-citrulline.

Belongs to the argininosuccinate synthase family. Type 2 subfamily. Homotetramer.

The protein resides in the cytoplasm. It carries out the reaction L-citrulline + L-aspartate + ATP = 2-(N(omega)-L-arginino)succinate + AMP + diphosphate + H(+). Its pathway is amino-acid biosynthesis; L-arginine biosynthesis; L-arginine from L-ornithine and carbamoyl phosphate: step 2/3. This is Argininosuccinate synthase from Salmonella newport (strain SL254).